We begin with the raw amino-acid sequence, 552 residues long: MEALIVFIVLSVSGAFAYKCSYERLWFKVGSLFDIISTSSKKNVIPLASKMEVGSNEDVSSMGNFINKFYTEYSLPSHKVLQSLRVLFSLAMMTYTVTIEIILWQIKVAGMDKEVTFITTWVWPLTAIMLSFILILFQPFFIIISLLNKFYNDKFDIDRLIIVTCIILSTLIALLSYINIGPFQYTKNILTRLSIGGVTVMASLSGLATVSSLYYNFLVIWHKFRNTPMSDPSFRNINNSNNNSKSLLWTTDAYIEEKIQDYEHNIEQNVQILRSLEEEVGENSTFKAELMEKIAWYQLELGKLEALLQQSPQVRTFKKAFEVGFIIYCLHKLIITFLKRIPYIIYHSLKYPDDYDYENFSENAASDPLAITIANILDFSFFRFNYQHDLDSLTKQISLFLSISLFLCCLSAVNTTISYVVTLLPIKFQILALFAMQNDDTANVLPEYTNNSSYKGKKRNYSQEQKGISLIKNLVVSELTGVYVLATTLMVRSHLPFEVSQRLKELLGGKFTVPNIVIDSWFDEVYAFACVFTFICIRIAERKLSTKKVSVE.

The next 4 helical transmembrane spans lie at 127–147 (AIMLSFILILFQPFFIIISLL), 160–180 (LIIVTCIILSTLIALLSYINI), 393–413 (LTKQISLFLSISLFLCCLSAV), and 517–537 (VIDSWFDEVYAFACVFTFICI).

The protein localises to the membrane. This is an uncharacterized protein from Saccharomyces cerevisiae (strain ATCC 204508 / S288c) (Baker's yeast).